The primary structure comprises 344 residues: Sorting nexin-16 (344 aa).

Over residues 1 to 10 (MATPYVPVPM) the composition is skewed to pro residues. 2 disordered regions span residues 1–66 (MATP…NTSS) and 81–107 (ASSIEYSTRPRDTEEQNPETVNWEDRP). Over residues 14-26 (NSASSFTTNRNQR) the composition is skewed to polar residues. Low complexity predominate over residues 27-40 (SSSFGSVSTSSNSS). A compositionally biased stretch (polar residues) spans 41-66 (KGQLEDSNMGNFKQTSVPDQMDNTSS). Residues 105-218 (DRPSTPTILG…EFLCLDDPPG (114 aa)) enclose the PX domain. A 1,2-diacyl-sn-glycero-3-phospho-(1D-myo-inositol-3-phosphate)-binding residues include Arg144, Thr146, and Arg184. Ser222 carries the phosphoserine modification. A coiled-coil region spans residues 223–278 (LEESRAFCETLEETNYRLQKELLEKQKEMESLKKLLSEKQLHIDTLENRIRTLSLE).

The protein belongs to the sorting nexin family. Homooligomer. Interacts with EGFR. As to expression, detected in placenta, lung, liver,heart and pancreas.

The protein localises to the early endosome membrane. Its subcellular location is the late endosome membrane. The protein resides in the cytoplasm. It is found in the lysosome. In terms of biological role, may be involved in several stages of intracellular trafficking. Plays a role in protein transport from early to late endosomes. Plays a role in protein transport to the lysosome. Promotes degradation of EGFR after EGF signaling. Plays a role in intracellular transport of vesicular stomatitis virus nucleocapsids from the endosome to the cytoplasm. In Homo sapiens (Human), this protein is Sorting nexin-16 (SNX16).